A 545-amino-acid polypeptide reads, in one-letter code: Germacrene D synthase 1 (545 aa).

Residues D298, D302, N443, and E451 each contribute to the Mg(2+) site. The DDXXD motif signature appears at 298–302 (DDTFD).

The protein belongs to the terpene synthase family. It depends on Mg(2+) as a cofactor.

It localises to the cytoplasm. The protein resides in the cytosol. The enzyme catalyses (2E,6E)-farnesyl diphosphate = (-)-germacrene D + diphosphate. Its pathway is secondary metabolite biosynthesis; terpenoid biosynthesis. In terms of biological role, sesquiterpene synthase involved in germacrene D biosynthesis. Also produces at least 13 additional sesquiterpene products, including germacrene C and (+)-germacrene A, beta-ylangene, (E)-beta-farnesene and (E,E)-alpha-farnesene. This is Germacrene D synthase 1 from Pogostemon cablin (Patchouli).